The following is a 386-amino-acid chain: Acetylornithine aminotransferase (386 aa).

Residues 96–97 (GA) and Phe-123 contribute to the pyridoxal 5'-phosphate site. Arg-126 is a N(2)-acetyl-L-ornithine binding site. 208 to 211 (DEVQ) contributes to the pyridoxal 5'-phosphate binding site. An N6-(pyridoxal phosphate)lysine modification is found at Lys-237. Ser-265 is a binding site for N(2)-acetyl-L-ornithine. Thr-266 contributes to the pyridoxal 5'-phosphate binding site.

Belongs to the class-III pyridoxal-phosphate-dependent aminotransferase family. ArgD subfamily. Homodimer. It depends on pyridoxal 5'-phosphate as a cofactor.

The protein localises to the cytoplasm. The enzyme catalyses N(2)-acetyl-L-ornithine + 2-oxoglutarate = N-acetyl-L-glutamate 5-semialdehyde + L-glutamate. It participates in amino-acid biosynthesis; L-arginine biosynthesis; N(2)-acetyl-L-ornithine from L-glutamate: step 4/4. The sequence is that of Acetylornithine aminotransferase from Bacillus cereus (strain ATCC 14579 / DSM 31 / CCUG 7414 / JCM 2152 / NBRC 15305 / NCIMB 9373 / NCTC 2599 / NRRL B-3711).